We begin with the raw amino-acid sequence, 365 residues long: Transcription elongation factor, mitochondrial (365 aa).

The transit peptide at 1 to 40 (MAWRANLACLIKAGGRTRWFPLPEYLSMSPVLHNTCSRRK) directs the protein to the mitochondrion.

Belongs to the TEFM family. Interacts with POLRMT.

The protein resides in the mitochondrion matrix. The protein localises to the mitochondrion nucleoid. Functionally, transcription elongation factor which increases mitochondrial RNA polymerase processivity. Regulates transcription of the mitochondrial genome, including genes important for the oxidative phosphorylation machinery. This is Transcription elongation factor, mitochondrial (Tefm) from Rattus norvegicus (Rat).